Reading from the N-terminus, the 348-residue chain is Uroporphyrinogen decarboxylase (348 aa).

Substrate-binding positions include 27 to 31, phenylalanine 46, aspartate 76, tyrosine 152, serine 207, and histidine 320; that span reads RQAGR.

It belongs to the uroporphyrinogen decarboxylase family. In terms of assembly, homodimer.

Its subcellular location is the cytoplasm. It carries out the reaction uroporphyrinogen III + 4 H(+) = coproporphyrinogen III + 4 CO2. It functions in the pathway porphyrin-containing compound metabolism; protoporphyrin-IX biosynthesis; coproporphyrinogen-III from 5-aminolevulinate: step 4/4. Its function is as follows. Catalyzes the decarboxylation of four acetate groups of uroporphyrinogen-III to yield coproporphyrinogen-III. The chain is Uroporphyrinogen decarboxylase from Bacillus cytotoxicus (strain DSM 22905 / CIP 110041 / 391-98 / NVH 391-98).